A 715-amino-acid polypeptide reads, in one-letter code: Fatty acid oxidation complex subunit alpha (715 aa).

The interval 1 to 190 is enoyl-CoA hydratase; that stretch reads MTTTSAFMLN…KAGLVDDVVP (190 aa). Positions 306–715 are 3-hydroxyacyl-CoA dehydrogenase; it reads GPLNSVGILG…WTNGETDQGN (410 aa).

It in the N-terminal section; belongs to the enoyl-CoA hydratase/isomerase family. In the central section; belongs to the 3-hydroxyacyl-CoA dehydrogenase family. Heterotetramer of two alpha chains (FadJ) and two beta chains (FadI).

The protein resides in the cytoplasm. It catalyses the reaction a (3S)-3-hydroxyacyl-CoA = a (2E)-enoyl-CoA + H2O. The enzyme catalyses a 4-saturated-(3S)-3-hydroxyacyl-CoA = a (3E)-enoyl-CoA + H2O. It carries out the reaction a (3S)-3-hydroxyacyl-CoA + NAD(+) = a 3-oxoacyl-CoA + NADH + H(+). The catalysed reaction is (3S)-3-hydroxybutanoyl-CoA = (3R)-3-hydroxybutanoyl-CoA. The protein operates within lipid metabolism; fatty acid beta-oxidation. Catalyzes the formation of a hydroxyacyl-CoA by addition of water on enoyl-CoA. Also exhibits 3-hydroxyacyl-CoA epimerase and 3-hydroxyacyl-CoA dehydrogenase activities. The chain is Fatty acid oxidation complex subunit alpha from Salmonella agona (strain SL483).